The chain runs to 129 residues: Sulfurtransferase TusD (129 aa).

Cys79 functions as the Cysteine persulfide intermediate in the catalytic mechanism.

Belongs to the DsrE/TusD family. As to quaternary structure, heterohexamer, formed by a dimer of trimers. The hexameric TusBCD complex contains 2 copies each of TusB, TusC and TusD. The TusBCD complex interacts with TusE.

The protein localises to the cytoplasm. Its function is as follows. Part of a sulfur-relay system required for 2-thiolation of 5-methylaminomethyl-2-thiouridine (mnm(5)s(2)U) at tRNA wobble positions. Accepts sulfur from TusA and transfers it in turn to TusE. In Pectobacterium atrosepticum (strain SCRI 1043 / ATCC BAA-672) (Erwinia carotovora subsp. atroseptica), this protein is Sulfurtransferase TusD.